Consider the following 468-residue polypeptide: MNSVLSNIEKLDTYILRRNEYVAESKDEPNKLNTSRKLEVTTKKNQSNNKKRPPPINKARKSLPSIFRRAEENKDSAQIITPTGSKIIGSPLYKRSKSDSFFDHAFNFDKNLGKGSFGEVVAATCRSTSKKFAIKKIPFSKLSKDQYREAYGHMNIPCHPNIVRFHQAWIDKQILHIQLEMCDKSLAAYCHGIDWLEDKELWNVFLDILQGLGHLHNNFMLHNDIKPDNIFMTKNKVCKLGDFGLISDMRSEPINNSSNKHYQSEGDGKYCSKEAINGTLSIFSDIFSFGISILEVGTNIHLPSYGTGWEPIRKWEIPEEILEPMSDELRELVKQMMDKAPTRRPTCSELMKNHVVKEKLRIRKQEVEHIPSESQFQPISYLTTESPLGSRESSCSSIDFLDHFENAEKKTPFVSKLNFDLEDDEDEYEVFSPPRTPVKKSRYQQTMPEVSPPRKIQKLFQRKNLFDE.

Basic and acidic residues predominate over residues 25–42; it reads SKDEPNKLNTSRKLEVTT. The segment at 25–63 is disordered; the sequence is SKDEPNKLNTSRKLEVTTKKNQSNNKKRPPPINKARKSL. Positions 49-61 are enriched in basic residues; sequence NKKRPPPINKARK. One can recognise a Protein kinase domain in the interval 106-357; the sequence is FNFDKNLGKG…SELMKNHVVK (252 aa). Residues 112–120 and lysine 135 each bind ATP; that span reads LGKGSFGEV. Aspartate 224 serves as the catalytic Proton acceptor. The Mg(2+) site is built by asparagine 229 and aspartate 242. Positions 425–453 are disordered; the sequence is EDEYEVFSPPRTPVKKSRYQQTMPEVSPP.

Belongs to the protein kinase superfamily. Ser/Thr protein kinase family. WEE1 subfamily. In terms of tissue distribution, in the 12-13-cell embryo, expressed in the E blastomere. In the 16-cell embryo, expressed in the eight AB cells.

It localises to the nucleus. The catalysed reaction is L-seryl-[protein] + ATP = O-phospho-L-seryl-[protein] + ADP + H(+). It carries out the reaction L-threonyl-[protein] + ATP = O-phospho-L-threonyl-[protein] + ADP + H(+). Functionally, acts as a negative regulator of entry into mitosis (G2 to M transition) by phosphorylation of the CDK1 kinase. The chain is Membrane-associated tyrosine- and threonine-specific cdc2-inhibitory kinase wee-1.1 (wee-1.1) from Caenorhabditis elegans.